Reading from the N-terminus, the 124-residue chain is Small ribosomal subunit protein uS12 (124 aa).

Positions 1–25 are disordered; sequence MARINQLVRKPRRARAKKSDVPALE. Asp89 is modified (3-methylthioaspartic acid). The interval 103-124 is disordered; that stretch reads DTAGVSGRRRGRSKYGEKKPKE.

This sequence belongs to the universal ribosomal protein uS12 family. Part of the 30S ribosomal subunit. Contacts proteins S8 and S17. May interact with IF1 in the 30S initiation complex.

Functionally, with S4 and S5 plays an important role in translational accuracy. Interacts with and stabilizes bases of the 16S rRNA that are involved in tRNA selection in the A site and with the mRNA backbone. Located at the interface of the 30S and 50S subunits, it traverses the body of the 30S subunit contacting proteins on the other side and probably holding the rRNA structure together. The combined cluster of proteins S8, S12 and S17 appears to hold together the shoulder and platform of the 30S subunit. This chain is Small ribosomal subunit protein uS12, found in Coxiella burnetii (strain Dugway 5J108-111).